We begin with the raw amino-acid sequence, 282 residues long: NADPH-dependent 7-cyano-7-deazaguanine reductase (282 aa).

88-90 (IES) serves as a coordination point for substrate. Residue 90 to 91 (SK) participates in NADPH binding. C190 functions as the Thioimide intermediate in the catalytic mechanism. Residue D197 is the Proton donor of the active site. 229-230 (HE) contacts substrate. 258–259 (RG) lines the NADPH pocket.

It belongs to the GTP cyclohydrolase I family. QueF type 2 subfamily. Homodimer.

Its subcellular location is the cytoplasm. It carries out the reaction 7-aminomethyl-7-carbaguanine + 2 NADP(+) = 7-cyano-7-deazaguanine + 2 NADPH + 3 H(+). The protein operates within tRNA modification; tRNA-queuosine biosynthesis. Its function is as follows. Catalyzes the NADPH-dependent reduction of 7-cyano-7-deazaguanine (preQ0) to 7-aminomethyl-7-deazaguanine (preQ1). The protein is NADPH-dependent 7-cyano-7-deazaguanine reductase of Escherichia coli (strain SMS-3-5 / SECEC).